Consider the following 59-residue polypeptide: Large ribosomal subunit protein bL32C (59 aa).

This sequence belongs to the bacterial ribosomal protein bL32 family.

The protein is Large ribosomal subunit protein bL32C (rpmF3) of Enterococcus faecalis (strain ATCC 700802 / V583).